Reading from the N-terminus, the 397-residue chain is MSIFKMMLIYFAILWVVNAAQLLDIDPQGVIPGAYIVVMKDRVSSLEFSSHVRWLKRTHRRNLAKRAIPFTEGLSATWDIAGWQAYSGSFDEDTVQEILNHENVEFVEPNKEMQVASTIKQGNVTWGLSRISHKENSSHDYVSTYGEGENITFYGIDSGIDINQADFTGRARWGINLADHVDTDCNGHGTHTAGTVAGQKFGILKKASIVSIKILDCYGYGDITRYINGLNWAINDAKERGLLGKSVMNISLKTGRSRAVNEATVRAQEAGIFIAVAAGNQATSAEFYSPGSAPEVCTVGASTRNDTKAIFSNYGELVDLFAPREYIRSTLPHNLTGLMSGTSMATPHVCGVGGLIMATEGLAPEKVCDRLKELANPTIQNPGFNTTNKLLYNGSGA.

The first 19 residues, methionine 1–alanine 19, serve as a signal peptide directing secretion. The propeptide occupies alanine 20 to alanine 116. Residues tyrosine 35–valine 115 form the Inhibitor I9 domain. 3 N-linked (GlcNAc...) asparagine glycosylation sites follow: asparagine 123, asparagine 136, and asparagine 150. Residues threonine 125–alanine 397 form the Peptidase S8 domain. Active-site charge relay system residues include aspartate 157 and histidine 188. Residues asparagine 249, asparagine 305, and asparagine 334 are each glycosylated (N-linked (GlcNAc...) asparagine). Serine 343 (charge relay system) is an active-site residue. Residues asparagine 385 and asparagine 393 are each glycosylated (N-linked (GlcNAc...) asparagine).

Belongs to the peptidase S8 family.

The protein resides in the secreted. Secreted subtilisin-like serine protease with keratinolytic activity that contributes to pathogenicity. This is Subtilisin-like protease 12 (SUB12) from Trichophyton verrucosum (strain HKI 0517).